Reading from the N-terminus, the 252-residue chain is MCYNKSMTKVNEERVQEIFNSISSDYDKMNAIISFKQHDLWRAKTMKRMGDLTGLSILDLCCGTGDWTFDLSESVGPSGKVIGLDFSENMLEIAKAKLKEEAKKNIEFLQGNAMALPFEKGSFDVVTIGYGLRNTPDYLTVLKEIFRVLKPGGRVVCIETSHPTLPIYKQAFELYFKNVMPFLGKVFAKSLKEYQWLQKSAEDFPDAKTLEELFRKAGFVAVEYQKHGGGAIASHFATKSQKPKSNIRIGKK.

S-adenosyl-L-methionine-binding positions include Thr64, Asp85, and Asn112–Ala113.

Belongs to the class I-like SAM-binding methyltransferase superfamily. MenG/UbiE family.

It catalyses the reaction a 2-demethylmenaquinol + S-adenosyl-L-methionine = a menaquinol + S-adenosyl-L-homocysteine + H(+). Its pathway is quinol/quinone metabolism; menaquinone biosynthesis; menaquinol from 1,4-dihydroxy-2-naphthoate: step 2/2. Functionally, methyltransferase required for the conversion of demethylmenaquinol (DMKH2) to menaquinol (MKH2). This is Demethylmenaquinone methyltransferase from Lactococcus lactis subsp. lactis (strain IL1403) (Streptococcus lactis).